Here is a 125-residue protein sequence, read N- to C-terminus: Casein kinase I isoform alpha (125 aa).

One can recognise a Protein kinase domain in the interval 1–125 (GEEVAVKLES…LIDFGLAKKY (125 aa)). Residue K7 participates in ATP binding. D97 acts as the Proton acceptor in catalysis.

The protein belongs to the protein kinase superfamily. CK1 Ser/Thr protein kinase family. Casein kinase I subfamily. In terms of assembly, interacts with the Axin complex. Interacts with TUT1, leading to TUT1 phosphorylation. Interacts with FAM83A, FAM83B, FAM83C, FAM83D, FAM83E, FAM83F, FAM83G and FAM83H (via DUF1669). Interaction with FAM83H recruits CSNK1A1 to keratin filaments. Phosphorylated by MTOR in response to mitogenic stimulation, leading to its activation.

It localises to the cytoplasm. Its subcellular location is the cytoskeleton. The protein resides in the microtubule organizing center. The protein localises to the centrosome. It is found in the chromosome. It localises to the centromere. Its subcellular location is the kinetochore. The protein resides in the nucleus speckle. The protein localises to the cilium basal body. It is found in the spindle. It carries out the reaction L-seryl-[protein] + ATP = O-phospho-L-seryl-[protein] + ADP + H(+). It catalyses the reaction L-threonyl-[protein] + ATP = O-phospho-L-threonyl-[protein] + ADP + H(+). In terms of biological role, casein kinases are operationally defined by their preferential utilization of acidic proteins such as caseins as substrates. It can phosphorylate a large number of proteins. Participates in Wnt signaling. Phosphorylates CTNNB1 at 'Ser-45'. May phosphorylate PER1 and PER2. May play a role in segregating chromosomes during mitosis. May play a role in keratin cytoskeleton disassembly and thereby, it may regulate epithelial cell migration. Acts as a positive regulator of mTORC1 and mTORC2 signaling in response to nutrients by mediating phosphorylation of DEPTOR inhibitor. Acts as an inhibitor of NLRP3 inflammasome assembly by mediating phosphorylation of NLRP3. In Sus scrofa (Pig), this protein is Casein kinase I isoform alpha (CSNK1A1).